The following is a 58-amino-acid chain: UPF0391 membrane protein Gbem_0127 (58 aa).

2 consecutive transmembrane segments (helical) span residues 4 to 24 (WALI…GGIA) and 33 to 53 (ILFY…LLAG).

The protein belongs to the UPF0391 family.

The protein localises to the cell membrane. This chain is UPF0391 membrane protein Gbem_0127, found in Citrifermentans bemidjiense (strain ATCC BAA-1014 / DSM 16622 / JCM 12645 / Bem) (Geobacter bemidjiensis).